Consider the following 259-residue polypeptide: Thiazole synthase (259 aa).

The active-site Schiff-base intermediate with DXP is K99. Residues G160, 187–188, and 209–210 contribute to the 1-deoxy-D-xylulose 5-phosphate site; these read AG and NT.

This sequence belongs to the ThiG family. Homotetramer. Forms heterodimers with either ThiH or ThiS.

Its subcellular location is the cytoplasm. The enzyme catalyses [ThiS sulfur-carrier protein]-C-terminal-Gly-aminoethanethioate + 2-iminoacetate + 1-deoxy-D-xylulose 5-phosphate = [ThiS sulfur-carrier protein]-C-terminal Gly-Gly + 2-[(2R,5Z)-2-carboxy-4-methylthiazol-5(2H)-ylidene]ethyl phosphate + 2 H2O + H(+). It participates in cofactor biosynthesis; thiamine diphosphate biosynthesis. Catalyzes the rearrangement of 1-deoxy-D-xylulose 5-phosphate (DXP) to produce the thiazole phosphate moiety of thiamine. Sulfur is provided by the thiocarboxylate moiety of the carrier protein ThiS. In vitro, sulfur can be provided by H(2)S. This chain is Thiazole synthase, found in Solibacter usitatus (strain Ellin6076).